The chain runs to 98 residues: NADH-ubiquinone oxidoreductase chain 4L (98 aa).

3 helical membrane passes run 1–21 (MSMV…GLLM), 29–49 (SLLC…VTIL), and 61–81 (IILL…LVMV).

This sequence belongs to the complex I subunit 4L family. As to quaternary structure, core subunit of respiratory chain NADH dehydrogenase (Complex I) which is composed of 45 different subunits.

The protein resides in the mitochondrion inner membrane. The catalysed reaction is a ubiquinone + NADH + 5 H(+)(in) = a ubiquinol + NAD(+) + 4 H(+)(out). Its function is as follows. Core subunit of the mitochondrial membrane respiratory chain NADH dehydrogenase (Complex I) which catalyzes electron transfer from NADH through the respiratory chain, using ubiquinone as an electron acceptor. Part of the enzyme membrane arm which is embedded in the lipid bilayer and involved in proton translocation. In Phoca fasciata (Ribbon seal), this protein is NADH-ubiquinone oxidoreductase chain 4L (MT-ND4L).